We begin with the raw amino-acid sequence, 861 residues long: DNA mismatch repair protein MutS (861 aa).

G618 to S625 lines the ATP pocket.

It belongs to the DNA mismatch repair MutS family.

Functionally, this protein is involved in the repair of mismatches in DNA. It is possible that it carries out the mismatch recognition step. This protein has a weak ATPase activity. The protein is DNA mismatch repair protein MutS of Shewanella sp. (strain ANA-3).